The primary structure comprises 126 residues: UPF0538 protein C2orf76 homolog (126 aa).

It belongs to the UPF0538 family.

This chain is UPF0538 protein C2orf76 homolog, found in Xenopus tropicalis (Western clawed frog).